The following is a 431-amino-acid chain: uncharacterized protein (431 aa).

2 4Fe-4S ferredoxin-type domains span residues 336 to 367 and 362 to 391; these read VRPV…NGLD and IDNG…MDTG.

This is an uncharacterized protein from Methanothermobacter thermautotrophicus (strain ATCC 29096 / DSM 1053 / JCM 10044 / NBRC 100330 / Delta H) (Methanobacterium thermoautotrophicum).